An 861-amino-acid polypeptide reads, in one-letter code: DNA topoisomerase 1 (861 aa).

Positions 3–141 constitute a Toprim domain; it reads KSLVIVESPA…KFSRVVFNEI (139 aa). The Mg(2+) site is built by Glu-9 and Asp-110. The Topo IA-type catalytic domain occupies 157–572; the sequence is NMNRVHAQQA…DFFKKFSEQL (416 aa). The segment at 191 to 196 is interaction with DNA; that stretch reads SAGRVQ. Tyr-318 acts as the O-(5'-phospho-DNA)-tyrosine intermediate in catalysis. C4-type zinc fingers lie at residues 596–628, 658–685, and 707–732; these read CPICCKKMGIKTAITGVFLSCLGYNNTDNKKRC, CDICNMYMDSYFINEKLKLHICANNPSC, and CEKCYNNMKLKIGPFGKFFTCINKIC.

The protein belongs to the type IA topoisomerase family. In terms of assembly, monomer. The cofactor is Mg(2+).

It carries out the reaction ATP-independent breakage of single-stranded DNA, followed by passage and rejoining.. Functionally, releases the supercoiling and torsional tension of DNA, which is introduced during the DNA replication and transcription, by transiently cleaving and rejoining one strand of the DNA duplex. Introduces a single-strand break via transesterification at a target site in duplex DNA. The scissile phosphodiester is attacked by the catalytic tyrosine of the enzyme, resulting in the formation of a DNA-(5'-phosphotyrosyl)-enzyme intermediate and the expulsion of a 3'-OH DNA strand. The free DNA strand then undergoes passage around the unbroken strand, thus removing DNA supercoils. Finally, in the religation step, the DNA 3'-OH attacks the covalent intermediate to expel the active-site tyrosine and restore the DNA phosphodiester backbone. This Buchnera aphidicola subsp. Acyrthosiphon pisum (strain APS) (Acyrthosiphon pisum symbiotic bacterium) protein is DNA topoisomerase 1.